The primary structure comprises 1469 residues: Regulation of nuclear pre-mRNA domain-containing protein 2 (1469 aa).

An N-acetylalanine modification is found at A2. Phosphoserine is present on S16. Residues 19–149 (SAGALESSLD…ALREALMDRA (131 aa)) form the CID domain. 2 disordered regions span residues 329 to 445 (STLP…TAAP) and 489 to 524 (TGVS…PSHN). Basic and acidic residues predominate over residues 370–386 (ESDKSATPEPVTDNRDV). Phosphoserine is present on S374. T376 is modified (phosphothreonine). Residues 387-396 (EDMELSDVED) are compositionally biased toward acidic residues. S392 carries the phosphoserine modification. The segment covering 397–412 (DGSKIIVEDRKEKPVE) has biased composition (basic and acidic residues). The segment covering 419–430 (GVPTKSTESVSK) has biased composition (polar residues). Residues 434 to 445 (CAPPSVPTTAAP) are compositionally biased toward pro residues. S492, S495, S498, and S504 each carry phosphoserine. T536 carries the phosphothreonine modification. Positions 572–594 (ASEVTSQSTTASPASTTGSAVKG) are disordered. Over residues 576–591 (TSQSTTASPASTTGSA) the composition is skewed to low complexity. Phosphoserine occurs at positions 583 and 612. Residue T617 is modified to Phosphothreonine. Residue S633 is modified to Phosphoserine. A compositionally biased stretch (polar residues) spans 647–656 (SLGFTGTHNP). Disordered regions lie at residues 647 to 686 (SLGF…TSPS), 716 to 867 (SSAP…AMMN), 919 to 1013 (SENC…SGVE), 1033 to 1140 (KNAS…HGRE), 1154 to 1183 (SSFD…FKTT), 1204 to 1328 (FNST…PTPP), and 1368 to 1414 (GPGL…HRDA). Phosphoserine occurs at positions 682, 684, 735, and 738. T742 bears the Phosphothreonine mark. Residue S749 is modified to Phosphoserine. Residue T751 is modified to Phosphothreonine. Residues 761 to 771 (PTSSSVDTMSL) are compositionally biased toward polar residues. Residues S777 and S781 each carry the phosphoserine modification. The segment covering 777 to 787 (SPGSSTPSSTR) has biased composition (low complexity). Residue T782 is modified to Phosphothreonine. Residues S788, S836, S845, S919, and S947 each carry the phosphoserine modification. Over residues 959–982 (PDSNHSGLSQSTAGHLTLPQTQYP) the composition is skewed to polar residues. S984 and S995 each carry phosphoserine. Residues 1047–1073 (QTPNKGTSSDGVSLSNLTQPSLPTTDQ) show a composition bias toward polar residues. A phosphoserine mark is found at S1086 and S1117. Over residues 1159–1168 (GPSSASELAS) the composition is skewed to low complexity. Positions 1169–1178 (LGGGGSGGLT) are enriched in gly residues. A compositionally biased stretch (pro residues) spans 1272 to 1295 (GPPPPPGEHSGVPFPPPPPPPPPG). Asymmetric dimethylarginine is present on R1375. 2 stretches are compositionally biased toward low complexity: residues 1377 to 1390 (SLSL…HLGP) and 1400 to 1409 (TSSSGLPLSP). Asymmetric dimethylarginine occurs at positions 1432 and 1438.

As to quaternary structure, associates with the RNA polymerase II complex.

This Mus musculus (Mouse) protein is Regulation of nuclear pre-mRNA domain-containing protein 2 (Rprd2).